A 344-amino-acid chain; its full sequence is L-rhamnose-proton symporter (344 aa).

10 helical membrane-spanning segments follow: residues 4-24 (AITM…CFYA), 38-58 (WSVG…ALLL), 68-88 (FNLS…IGNI), 101-121 (MGIG…TPII), 137-157 (TLLG…AGQL), 175-195 (LLLA…MNAA), 214-234 (LPSY…FCFI), 259-279 (ILLS…YAWG), 290-310 (MSWM…GLVL), and 321-341 (VAVL…VGLG).

The protein belongs to the L-rhamnose transporter (TC 2.A.7.6) family.

It is found in the cell inner membrane. It carries out the reaction L-rhamnopyranose(in) + H(+)(in) = L-rhamnopyranose(out) + H(+)(out). In terms of biological role, uptake of L-rhamnose across the cytoplasmic membrane with the concomitant transport of protons into the cell (symport system). This is L-rhamnose-proton symporter from Salmonella paratyphi A (strain ATCC 9150 / SARB42).